A 123-amino-acid chain; its full sequence is Small ribosomal subunit protein uS12 (123 aa).

Asp-89 is modified (3-methylthioaspartic acid). Residues 104 to 123 form a disordered region; the sequence is TAGVQDRRQGRSKYGAKRPK. Residues 113-123 are compositionally biased toward basic residues; the sequence is GRSKYGAKRPK.

Belongs to the universal ribosomal protein uS12 family. In terms of assembly, part of the 30S ribosomal subunit. Contacts proteins S8 and S17. May interact with IF1 in the 30S initiation complex.

In terms of biological role, with S4 and S5 plays an important role in translational accuracy. Functionally, interacts with and stabilizes bases of the 16S rRNA that are involved in tRNA selection in the A site and with the mRNA backbone. Located at the interface of the 30S and 50S subunits, it traverses the body of the 30S subunit contacting proteins on the other side and probably holding the rRNA structure together. The combined cluster of proteins S8, S12 and S17 appears to hold together the shoulder and platform of the 30S subunit. In Oleidesulfovibrio alaskensis (strain ATCC BAA-1058 / DSM 17464 / G20) (Desulfovibrio alaskensis), this protein is Small ribosomal subunit protein uS12.